The sequence spans 340 residues: MLDPRARTLLKTLIERYIADGQPVGSRTLSRYSGLELSPATIRNVMSDLEELGLVSSPHTSAGRIPTPRGYRLFVDTMLTVEAPIDAEAVARQVQNTLQAGEPQQRVVAAAASVLSNLSQFAGVVLTPRRSHVFKQIEFMRLSDKRILLIIVTPEGDVQNRMLATPRDYSPSQLTEASNYINAHFAGLSFDEVRRRLRDEIDQLRGDMTTLMHAAVTASTEVPDTEDTVLISGERNLLEVADLSSDMARLRKLFDVFDQKTGLLQLLDVSSHAQGVQIFIGGESTLVPIEEMSVVTAPYEVNGKIVGTLGVIGPTRMAYNRVIPIVDITARLLSLTLSQQ.

It belongs to the HrcA family.

In terms of biological role, negative regulator of class I heat shock genes (grpE-dnaK-dnaJ and groELS operons). Prevents heat-shock induction of these operons. The protein is Heat-inducible transcription repressor HrcA of Burkholderia cenocepacia (strain ATCC BAA-245 / DSM 16553 / LMG 16656 / NCTC 13227 / J2315 / CF5610) (Burkholderia cepacia (strain J2315)).